The following is a 564-amino-acid chain: Cytochrome c oxidase subunit 1 (564 aa).

Positions 1-23 (MTAVAPRLENYAEPTRPAPTGGA) are disordered. Transmembrane regions (helical) follow at residues 43–63 (MMYI…ALLI), 83–103 (LFTL…VWGF), 122–142 (LNAF…AGFL), 171–191 (FWII…VNMI), 214–234 (IFVA…AALG), 259–279 (LFWF…FGIV), and 292–312 (FGYI…MAVW). H87 lines the Fe(II)-heme a pocket. Residues H265 and Y269 each contribute to the Cu cation site. A cross-link (1'-histidyl-3'-tyrosine (His-Tyr)) is located at residues 265–269 (HPEVY). Cu cation contacts are provided by H314 and H315. 2 consecutive transmembrane segments (helical) span residues 316 to 336 (MFVT…LISV) and 360 to 380 (MTWT…GIML). Position 398 (H398) interacts with heme a3. A run of 3 helical transmembrane segments spans residues 399 to 419 (FHYT…YFWF), 434 to 454 (IHFW…HWVG), and 477 to 497 (ISTV…WNVF). H400 serves as a coordination point for Fe(II)-heme a.

Belongs to the heme-copper respiratory oxidase family. Associates with subunits II, III and IV to form cytochrome c oxidase. Cu(2+) is required as a cofactor. Heme serves as cofactor.

It is found in the cell membrane. The enzyme catalyses 4 Fe(II)-[cytochrome c] + O2 + 8 H(+)(in) = 4 Fe(III)-[cytochrome c] + 2 H2O + 4 H(+)(out). Its pathway is energy metabolism; oxidative phosphorylation. Its function is as follows. Cytochrome c oxidase is the component of the respiratory chain that catalyzes the reduction of oxygen to water. Subunits 1-3 form the functional core of the enzyme complex. CO I is the catalytic subunit of the enzyme. Electrons originating in cytochrome c are transferred via the copper A center of subunit 2 and heme A of subunit 1 to the bimetallic center formed by heme A3 and copper B. The chain is Cytochrome c oxidase subunit 1 (ctaD) from Corynebacterium diphtheriae (strain ATCC 700971 / NCTC 13129 / Biotype gravis).